The following is a 235-amino-acid chain: MTSESATVIQMDDGRAPAPAAAGAAAAAAASSSYATAPTSISAAEPAAAPRKTTTVPFLLRSGAEGFRRCLAVIDFLLRVAAFGPTLAAAISTGTADERLSVFTNFFQFHARFDDFPAFTFFLVANAVAAGYLVLSLPFSVVVILRPNKATGGVRLLLLLCDVLIMALLTAAGAAAAAIVYVAHSGNRRANWVPICMQFHGFCQRTSGSVVATFLAVLVFIVLILMAACVIRRSK.

The Cytoplasmic portion of the chain corresponds to 1 to 70 (MTSESATVIQ…RSGAEGFRRC (70 aa)). Residues 71-91 (LAVIDFLLRVAAFGPTLAAAI) form a helical membrane-spanning segment. At 92 to 118 (STGTADERLSVFTNFFQFHARFDDFPA) the chain is on the extracellular side. Residues 119–139 (FTFFLVANAVAAGYLVLSLPF) form a helical membrane-spanning segment. Residues 140 to 162 (SVVVILRPNKATGGVRLLLLLCD) are Cytoplasmic-facing. A helical transmembrane segment spans residues 163–183 (VLIMALLTAAGAAAAAIVYVA). The Extracellular portion of the chain corresponds to 184–210 (HSGNRRANWVPICMQFHGFCQRTSGSV). A helical transmembrane segment spans residues 211–231 (VATFLAVLVFIVLILMAACVI). Over 232–235 (RRSK) the chain is Cytoplasmic.

Belongs to the Casparian strip membrane proteins (CASP) family. In terms of assembly, homodimer and heterodimers.

It is found in the cell membrane. Regulates membrane-cell wall junctions and localized cell wall deposition. Required for establishment of the Casparian strip membrane domain (CSD) and the subsequent formation of Casparian strips, a cell wall modification of the root endodermis that determines an apoplastic barrier between the intraorganismal apoplasm and the extraorganismal apoplasm and prevents lateral diffusion. This chain is Casparian strip membrane protein 2, found in Sorghum bicolor (Sorghum).